The following is a 391-amino-acid chain: Toluene efflux pump periplasmic linker protein TtgG (391 aa).

The N-terminal stretch at Met1–Gly32 is a signal peptide. Residue Cys33 is the site of N-palmitoyl cysteine attachment. Cys33 is lipidated: S-diacylglycerol cysteine. A coiled-coil region spans residues Arg107–Thr136.

The protein belongs to the membrane fusion protein (MFP) (TC 8.A.1) family.

The protein resides in the cell inner membrane. Functionally, the periplasmic linker component of an organic solvent efflux pump. Involved in export of a number of organic solvents, including toluene and styrene. This is the most important solvent efflux pump in this strain, although it can export AMP and some antibiotics. This chain is Toluene efflux pump periplasmic linker protein TtgG (ttgG), found in Pseudomonas putida (strain DOT-T1E).